Reading from the N-terminus, the 486-residue chain is Glutamyl-tRNA(Gln) amidotransferase subunit A (486 aa).

Residues lysine 76 and serine 151 each act as charge relay system in the active site. The Acyl-ester intermediate role is filled by serine 175.

Belongs to the amidase family. GatA subfamily. Heterotrimer of A, B and C subunits.

It carries out the reaction L-glutamyl-tRNA(Gln) + L-glutamine + ATP + H2O = L-glutaminyl-tRNA(Gln) + L-glutamate + ADP + phosphate + H(+). In terms of biological role, allows the formation of correctly charged Gln-tRNA(Gln) through the transamidation of misacylated Glu-tRNA(Gln) in organisms which lack glutaminyl-tRNA synthetase. The reaction takes place in the presence of glutamine and ATP through an activated gamma-phospho-Glu-tRNA(Gln). The sequence is that of Glutamyl-tRNA(Gln) amidotransferase subunit A from Chromohalobacter salexigens (strain ATCC BAA-138 / DSM 3043 / CIP 106854 / NCIMB 13768 / 1H11).